Consider the following 600-residue polypeptide: DNA repair and recombination protein mus-11 (600 aa).

Residues 148–152 (KRALR) mediate DNA binding. Positions 268-319 (LNPQAQQSRPLSRSGSTGSLNTRQQPQNSHQFTARAQSRPPQQQLNSNQSRP) are enriched in polar residues. Disordered stretches follow at residues 268–357 (LNPQ…AGAA) and 387–600 (APKP…QRLA). Composition is skewed to low complexity over residues 325-343 (NNSS…TTPQ) and 458-470 (ARSA…RAGP). The span at 502-512 (GFSSSPSTNRG) shows a compositional bias: polar residues. 2 stretches are compositionally biased toward low complexity: residues 540 to 564 (SATT…APSA) and 577 to 591 (ANAS…ATSG).

It belongs to the RAD52 family. In terms of assembly, part of a complex that includes mei-3/rad51 and mus-11/rad52.

It localises to the nucleus. Its function is as follows. Involved in DNA double-strand break (DSB) repair and recombination. Promotes the annealing of complementary single-stranded DNA and by stimulation of the mei-3/rad51 recombinase. This Neurospora crassa (strain ATCC 24698 / 74-OR23-1A / CBS 708.71 / DSM 1257 / FGSC 987) protein is DNA repair and recombination protein mus-11 (mus-11).